The sequence spans 147 residues: uncharacterized protein (147 aa).

The HTH LytTR-type domain occupies 44–147 (LVGYIDKEIH…LKSIKERLSI (104 aa)).

The protein localises to the cytoplasm. This is an uncharacterized protein from Staphylococcus aureus (strain COL).